Reading from the N-terminus, the 84-residue chain is Small ribosomal subunit protein bS16 (84 aa).

Belongs to the bacterial ribosomal protein bS16 family.

The chain is Small ribosomal subunit protein bS16 from Endomicrobium trichonymphae.